Consider the following 256-residue polypeptide: Thiazole synthase (256 aa).

The Schiff-base intermediate with DXP role is filled by Lys95. Residues Gly156, 182–183, and 204–205 each bind 1-deoxy-D-xylulose 5-phosphate; these read AG and NT.

The protein belongs to the ThiG family. Homotetramer. Forms heterodimers with either ThiH or ThiS.

The protein resides in the cytoplasm. It catalyses the reaction [ThiS sulfur-carrier protein]-C-terminal-Gly-aminoethanethioate + 2-iminoacetate + 1-deoxy-D-xylulose 5-phosphate = [ThiS sulfur-carrier protein]-C-terminal Gly-Gly + 2-[(2R,5Z)-2-carboxy-4-methylthiazol-5(2H)-ylidene]ethyl phosphate + 2 H2O + H(+). Its pathway is cofactor biosynthesis; thiamine diphosphate biosynthesis. Its function is as follows. Catalyzes the rearrangement of 1-deoxy-D-xylulose 5-phosphate (DXP) to produce the thiazole phosphate moiety of thiamine. Sulfur is provided by the thiocarboxylate moiety of the carrier protein ThiS. In vitro, sulfur can be provided by H(2)S. The sequence is that of Thiazole synthase from Escherichia coli O81 (strain ED1a).